The chain runs to 1074 residues: Transmembrane protein 132E (1074 aa).

Positions Met1–Ala23 are cleaved as a signal peptide. The Extracellular portion of the chain corresponds to Arg26–Ala894. Residues Asn70 and Asn91 are each glycosylated (N-linked (GlcNAc...) asparagine). Disordered regions lie at residues Pro205–Ala224 and Gly243–Thr266. A compositionally biased stretch (low complexity) spans Ser247 to Ala262. N-linked (GlcNAc...) asparagine glycans are attached at residues Asn320 and Asn401. Disordered regions lie at residues Arg564–Gly587 and Gly816–Pro867. Over residues Gly843–Gly854 the composition is skewed to low complexity. The helical transmembrane segment at Leu895–Leu915 threads the bilayer. Over Arg916 to Ala1074 the chain is Cytoplasmic. The interval Val962–His1064 is disordered. Low complexity-rich tracts occupy residues Ser973–His985 and Phe1016–Glu1026. A compositionally biased stretch (acidic residues) spans Gly1035–Leu1044.

The protein belongs to the TMEM132 family. In terms of tissue distribution, widely expressed, with highest levels in the cochlea. In the cochlea, detected in spiral ganglion, the organ of Corti and stria vascularis. In the organ of Corti, prominently expressed in the outer and inner hair cells, especially at the apical and basal region of the outer hair cell body (at protein level).

Its subcellular location is the membrane. Required for normal inner ear hair cell function and hearing. The protein is Transmembrane protein 132E (Tmem132e) of Mus musculus (Mouse).